The following is a 522-amino-acid chain: DNA damage-binding protein cmr1 (522 aa).

A compositionally biased stretch (polar residues) spans 34–47 (VFTPTLPNRATGSQ). Disordered stretches follow at residues 34-89 (VFTP…KRKA) and 217-239 (QEKPTSVKQEDEDEEDDDPDPVL). Residues 49-59 (KTKKKPAPKKV) are compositionally biased toward basic residues. One copy of the WD 1 repeat lies at 182-223 (LTPERVYTMTFHPSETKPLIFAGDKMGHLGILDASQEKPTSV). Residues 226–236 (EDEDEEDDDPD) are compositionally biased toward acidic residues. WD repeat units follow at residues 244–284 (PHTR…SVER), 294–331 (VPLSGLDMAADDPNTLYWTTLEGEFGRYDMRTPKQGSV), 336–376 (LSEK…RREP), 381–422 (EHQS…ASWK), 445–488 (GRWV…LAQL), and 491–522 (DGITAVPAVAVFHRSKNWIAGGTASGKICLWM).

It belongs to the WD repeat DDB2/WDR76 family.

In terms of biological role, DNA-binding protein that binds to both single- and double-stranded DNA. Binds preferentially to UV-damaged DNA. May be involved in DNA-metabolic processes. In Aspergillus oryzae (strain ATCC 42149 / RIB 40) (Yellow koji mold), this protein is DNA damage-binding protein cmr1.